The sequence spans 103 residues: Large ribosomal subunit protein bL21 (103 aa).

It belongs to the bacterial ribosomal protein bL21 family. As to quaternary structure, part of the 50S ribosomal subunit. Contacts protein L20.

Functionally, this protein binds to 23S rRNA in the presence of protein L20. This chain is Large ribosomal subunit protein bL21, found in Paracidovorax citrulli (strain AAC00-1) (Acidovorax citrulli).